A 2228-amino-acid polypeptide reads, in one-letter code: Genome polyprotein (2228 aa).

The segment at 56-76 (AEVGAHQSEPLKTSVDKPGSK) is disordered. 2 short sequence motifs ((L)YPX(n)L motif) span residues 167-171 (YPHGL) and 200-205 (YPVWEL). The tract at residues 766 to 836 (MLDRIALGDL…PRKIKGVFSQ (71 aa)) is involved in P1-2A pentamerization. Residues 1011-1031 (TVEIINTVLCFVKSGILLYVI) form a helical membrane-spanning segment. The tract at residues 1043-1070 (IGLLRVMNYADIGCSVISCGKVFSKMLE) is membrane-penetrating ability. A coiled-coil region spans residues 1127–1152 (NKKDVLNILKDNQQKIERAIEEADNF). Positions 1204-1366 (HQKLKNLGSI…SFFKNPHNDM (163 aa)) constitute an SF3 helicase domain. Residue 1230-1237 (GKRGGGKS) participates in ATP binding. A helical membrane pass occupies residues 1462 to 1482 (WVAVGAAVGVLGVLVGGWYVY). Y1499 carries the post-translational modification O-(5'-phospho-RNA)-tyrosine. In terms of domain architecture, Peptidase C3 spans 1514-1728 (DPVESQSTLE…VAKLVTQEMF (215 aa)). Catalysis depends on for protease 3C activity residues H1563, D1603, and C1691. Positions 1977–2098 (DVGLDLDFSA…VFSRQVQFDN (122 aa)) constitute a RdRp catalytic domain.

It belongs to the picornaviridae polyprotein family. In terms of assembly, homodimer. Homomultimer; probably interacts with membranes in a multimeric form. Seems to assemble into amyloid-like fibers. Homodimer. Monomer. Interacts with protein 3CD. As to quaternary structure, interacts with host ACBD3. In terms of assembly, interacts with protein 3AB. Interacts with human MAVS. As to quaternary structure, homodimer; disulfide-linked. In terms of assembly, homopentamer. Homooligomer. Interacts with capsid protein VP2. Interacts with capsid protein VP3. As to quaternary structure, interacts with capsid protein VP1. Interacts with capsid protein VP3. In terms of assembly, interacts with capsid protein VP1. Interacts with capsid protein VP2. Post-translationally, specific enzymatic cleavages by viral protease in vivo yield a variety of precursors and mature proteins. Polyprotein processing intermediates are produced, such as P1-2A which is a functional precursor of the structural proteins, VP0 which is a VP4-VP2 precursor, VP1-2A precursor, 3ABC precursor which is a stable and catalytically active precursor of 3A, 3B and 3C proteins, 3AB and 3CD precursors. The assembly signal 2A is removed from VP1-2A by a host protease, possibly host Cathepsin L. This cleavage occurs over a region of 3 amino-acids probably generating VP1 proteins with heterogeneous C-termini. In terms of processing, during virion maturation, immature virions are rendered infectious following cleavage of VP0 into VP4 and VP2. This maturation seems to be an autocatalytic event triggered by the presence of RNA in the capsid and is followed by a conformational change of the particle. The assembly signal 2A is removed from VP1-2A by a host protease, possibly host Cathepsin L in naked virions. This cleavage does not occur in enveloped virions. This cleavage occurs over a region of 3 amino-acids probably generating VP1 proteins with heterogeneous C-termini. Post-translationally, VPg is uridylylated prior to priming replication into VPg-pUpU. In terms of processing, unlike other picornaviruses, does not seem to be myristoylated.

The protein resides in the virion. The protein localises to the host endosome. It is found in the host multivesicular body. Its subcellular location is the host membrane. It localises to the host mitochondrion outer membrane. The protein resides in the host cytoplasm. The protein localises to the host cytoplasmic vesicle membrane. The catalysed reaction is RNA(n) + a ribonucleoside 5'-triphosphate = RNA(n+1) + diphosphate. The enzyme catalyses a ribonucleoside 5'-triphosphate + H2O = a ribonucleoside 5'-diphosphate + phosphate + H(+). It catalyses the reaction Selective cleavage of Gln-|-Gly bond in the poliovirus polyprotein. In other picornavirus reactions Glu may be substituted for Gln, and Ser or Thr for Gly.. Its function is as follows. Capsid proteins VP1, VP2, and VP3 form a closed capsid enclosing the viral positive strand RNA genome. All these proteins contain a beta-sheet structure called beta-barrel jelly roll. Together they form an icosahedral capsid (T=3) composed of 60 copies of each VP1, VP2, and VP3, with a diameter of approximately 300 Angstroms. VP1 is situated at the 12 fivefold axes, whereas VP2 and VP3 are located at the quasi-sixfold axes. The naked capsid interacts with the host receptor HAVCR1 to provide virion attachment to and probably entry into the target cell. In terms of biological role, VP0 precursor is a component of the immature procapsids. Plays a role in the assembly of the 12 pentamers into an icosahedral structure. Has not been detected in mature virions, supposedly owing to its small size. Functionally, precursor component of immature procapsids that corresponds to an extended form of the structural protein VP1. After maturation, possibly by the host Cathepsin L, the assembly signal 2A is cleaved to give rise to the mature VP1 protein. Its function is as follows. Functions as a viroporin. Affects membrane integrity and causes an increase in membrane permeability. Involved in host intracellular membrane rearrangements probably to give rise to the viral factories. Does not disrupt calcium homeostasis or glycoprotein trafficking. Antagonizes the innate immune response of the host by suppressing IFN-beta synthesis, which it achieves by interfering with the RIG-I/IFIH1 pathway. In terms of biological role, affects membrane integrity and causes an increase in membrane permeability. Associates with and induces structural rearrangements of intracellular membranes. Displays RNA-binding activity. Functionally, the precursor 3ABC is targeted to the mitochondrial membrane where protease 3C activity cleaves and inhibits the host antiviral protein MAVS, thereby disrupting activation of IRF3 through the IFIH1/MDA5 pathway. In vivo, the protease activity of 3ABC precursor is more efficient in cleaving the 2BC precursor than that of protein 3C. The 3ABC precursor may therefore play a role in the proteolytic processing of the polyprotein. Possible viroporin. Its function is as follows. Interacts with the 3CD precursor and with RNA structures found at both the 5'- and 3'-termini of the viral genome. Since the 3AB precursor contains the hydrophobic domain 3A, it probably anchors the whole viral replicase complex to intracellular membranes on which viral RNA synthesis occurs. In terms of biological role, may serve as membrane anchor to the 3AB and 3ABC precursors via its hydrophobic domain. May interact with RNA. Acts as a primer for viral RNA replication and remains covalently bound to viral genomic RNA. VPg is uridylylated prior to priming replication into VPg-pUpU. The VPg-pUpU is then used as primer on the genomic RNA poly(A) by the RNA-dependent RNA polymerase to replicate the viral genome. Functionally, cysteine protease that generates mature viral proteins from the precursor polyprotein. In addition to its proteolytic activity, it binds to viral RNA, and thus influences viral genome replication. RNA and substrate bind cooperatively to the protease. Cleaves IKBKG/NEMO to impair innate immune signaling. Cleaves host PABPC1 which may participate in the switch of viral translation to RNA synthesis. Its function is as follows. Interacts with the 3AB precursor and with RNA structures found at both the 5'- and 3'-termini of the viral genome. Disrupts TLR3 signaling by degrading the host adapter protein TICAM1/TRIF. In terms of biological role, RNA-directed RNA polymerase 3D-POL replicates genomic and antigenomic RNA by recognizing replications specific signals. The sequence is that of Genome polyprotein from Cercopithecus hamlyni (Owl-faced monkey).